A 244-amino-acid chain; its full sequence is 1-(5-phosphoribosyl)-5-[(5-phosphoribosylamino)methylideneamino] imidazole-4-carboxamide isomerase (244 aa).

Catalysis depends on D9, which acts as the Proton acceptor. D131 functions as the Proton donor in the catalytic mechanism.

Belongs to the HisA/HisF family.

Its subcellular location is the cytoplasm. The enzyme catalyses 1-(5-phospho-beta-D-ribosyl)-5-[(5-phospho-beta-D-ribosylamino)methylideneamino]imidazole-4-carboxamide = 5-[(5-phospho-1-deoxy-D-ribulos-1-ylimino)methylamino]-1-(5-phospho-beta-D-ribosyl)imidazole-4-carboxamide. Its pathway is amino-acid biosynthesis; L-histidine biosynthesis; L-histidine from 5-phospho-alpha-D-ribose 1-diphosphate: step 4/9. This Campylobacter jejuni subsp. doylei (strain ATCC BAA-1458 / RM4099 / 269.97) protein is 1-(5-phosphoribosyl)-5-[(5-phosphoribosylamino)methylideneamino] imidazole-4-carboxamide isomerase.